Here is a 317-residue protein sequence, read N- to C-terminus: Putative carboxypeptidase RP402 (317 aa).

Ser125 acts as the Nucleophile in catalysis. Catalysis depends on charge relay system residues Glu225 and His288.

This sequence belongs to the peptidase S66 family.

This is Putative carboxypeptidase RP402 from Rickettsia prowazekii (strain Madrid E).